The sequence spans 237 residues: CD99 antigen-like protein 2 (237 aa).

An N-terminal signal peptide occupies residues Met1 to Gly25. Residues Asp26–Gly161 are Extracellular-facing. The interval Asp47–Ser157 is disordered. 2 stretches are compositionally biased toward low complexity: residues Thr51–Ala66 and Thr74–Arg84. Positions Asp102–Lys111 are enriched in basic and acidic residues. An O-linked (Xyl...) (chondroitin sulfate) serine glycan is attached at Ser154. A helical transmembrane segment spans residues Thr162–Ile182. Residues Ser183–Ile237 are Cytoplasmic-facing. Over residues Thr218–Ala227 the composition is skewed to polar residues. The interval Thr218–Ile237 is disordered. Positions Glu228 to Ile237 are enriched in pro residues.

It belongs to the CD99 family. Post-translationally, O-glycosylated. Highly expressed in the nervous system, including brain, dentate nucleus of hippocampus, granular and Purkinje cells of cerebellum, brain stem nucleus and choroid plexus. Expressed in peripheral blood T- and B-cells and neutrophils (at protein level). Almost undetectable in bone marrow-derived neutrophils (at protein level). Also expressed in thymocytes (at protein level) with higher expression in cortical thymocytes than in medullary thymocytes. Expressed at high levels in testis (mostly in germ cells and Sertoli cells) and ovary (mostly in granulosa cells). Expressed in lung, heart, kidney and liver (at protein level); however, expression in heart, kidney and liver seems restricted to endothelial cells (at protein level). Highly expressed in endothelial cells and to a lower level in vascular smooth muscle cells (at protein level). Low expression in spleen.

It is found in the cell membrane. It localises to the cell junction. The protein localises to the secreted. In terms of biological role, plays a role in a late step of leukocyte extravasation helping cells to overcome the endothelial basement membrane. Acts at the same site as, but independently of, PECAM1. Homophilic adhesion molecule, but these interactions may not be required for cell aggregation. The chain is CD99 antigen-like protein 2 (Cd99l2) from Mus musculus (Mouse).